The chain runs to 3341 residues: Genome polyprotein (3341 aa).

2 stretches are compositionally biased toward basic and acidic residues: residues 1–14 (MKRK…KAPG) and 24–35 (REGRRKDKDKGG). The disordered stretch occupies residues 1–57 (MKRKDLEARGKAPGRDSSTPFWGREGRRKDKDKGGESPSNRQVTLKTPIQSGRRAGK). Topologically, residues 1–120 (MKRKDLEARG…LESRRTTGNP (120 aa)) are cytoplasmic. Residues 37 to 50 (SPSNRQVTLKTPIQ) show a composition bias toward polar residues. A hydrophobic; homodimerization of capsid protein C region spans residues 55–97 (AGKRQRVGLLGRLGVGWGSFLQEDIVQALIHMALVLHALFASI). A propeptide spans 117 to 136 (TGNPMTLAFILGFLTVLCGC) (ER anchor for the capsid protein C, removed in mature form by serine protease NS3). Residues 121-141 (MTLAFILGFLTVLCGCVVIDM) form a helical membrane-spanning segment. Residues 142 to 245 (QVSTTRGTEI…AFKTIRENKT (104 aa)) lie on the Extracellular side of the membrane. N-linked (GlcNAc...) asparagine; by host glycosylation is found at N157 and N243. A helical membrane pass occupies residues 246–262 (IFIVALLCVAIAKRWPT). Position 263 (W263) is a topological domain, cytoplasmic. A helical membrane pass occupies residues 264 to 278 (VVILLAIGTWTTVKG). Residues 279-665 (EFVEPLYTLK…GVWQDLVGKF (387 aa)) are Extracellular-facing. The N-linked (GlcNAc...) asparagine; by host glycan is linked to N339. Residues 371–384 (NRGWGTGCFKWGIG) form an involved in fusion region. N399, N411, N575, and N611 each carry an N-linked (GlcNAc...) asparagine; by host glycan. A helical membrane pass occupies residues 666–686 (SVGAFFSNTALLVILVLAALI). Residues 687–689 (DKR) lie on the Cytoplasmic side of the membrane. Residues 690 to 705 (IAFLLVLGGYFYYVRA) form a helical membrane-spanning segment. Topologically, residues 706 to 1138 (DLGCGIDTTR…AKTRTSTLTR (433 aa)) are extracellular. N-linked (GlcNAc...) asparagine; by host glycans are attached at residues N794, N896, N993, and N1027. A helical membrane pass occupies residues 1139–1159 (LFLTILAMALFGLPNLFSSVG). The Cytoplasmic portion of the chain corresponds to 1160 to 1178 (LSAWVLLVASSSAQPQDLS). Residues 1179–1199 (MNLWIVLQTGSSAVLLLGYMI) traverse the membrane as a helical segment. Topologically, residues 1200–1204 (RRKLA) are lumenal. Residues 1205 to 1225 (MVLGVHHLVTLMCVQFLFSAV) form a helical membrane-spanning segment. The Cytoplasmic portion of the chain corresponds to 1226–1231 (DRYQKY). Residues 1232–1252 (LYGLLELMASVVLLSAYKSVL) form a helical membrane-spanning segment. Over 1253–1261 (QALPPEVLC) the chain is Lumenal. The chain crosses the membrane as a helical span at residues 1262-1282 (FSLVMGWKTALSLATVVFLIF). The Cytoplasmic portion of the chain corresponds to 1283 to 1303 (SLNAMYKYACQYHNPRNGYRD). The helical transmembrane segment at 1304 to 1324 (SGANLWFWTVSLASAGGIWAA) threads the bilayer. Topologically, residues 1325–1326 (EK) are lumenal. Residues 1327 to 1347 (AHQPTVAAVLAFTMVVLFLYM) form a helical membrane-spanning segment. Residues 1348–1403 (EQTNVSMELEFISAGETPEGVSTENDDGINIPDLKGRYGEDGIVVGAASSSGYLPE) lie on the Cytoplasmic side of the membrane. The helical intramembrane region spans 1404–1424 (LVFVFLLGFAVTSTSYFLGAL). Over 1425–2089 (YLLIATSTNL…TERSLTVVMA (665 aa)) the chain is Cytoplasmic. The region spanning 1452 to 1630 (SDDLLGLGGP…KPTDVTESLN (179 aa)) is the Peptidase S7 domain. Active-site charge relay system; for serine protease NS3 activity residues include H1506, D1530, and S1589. The 154-residue stretch at 1627-1780 (ESLNCDSTRR…SNYAISDQSI (154 aa)) folds into the Helicase ATP-binding domain. 1640-1647 (WHPGKGKT) serves as a coordination point for ATP. The short motif at 1729 to 1732 (DECH) is the DECH box element. In terms of domain architecture, Helicase C-terminal spans 1793-1947 (NVQKSVGAKK…TFMLEEAAYS (155 aa)). A helical transmembrane segment spans residues 2090-2110 (FVLGVSIMLSCFIAVWALCFL). The Lumenal portion of the chain corresponds to 2111 to 2145 (FSLFRPKKATYEQMPSSDPLSGGVLVSTPSVLYCM). A helical transmembrane segment spans residues 2146–2166 (GVPLGFCVVITLAMFLVYPVL). The Cytoplasmic portion of the chain corresponds to 2167-2178 (YKSIGNRSYMDS). A helical membrane pass occupies residues 2179–2199 (DLVKWVILGSCLICGVLAWEM). Topologically, residues 2200–2242 (RMFPNIRSDLMELVKAVKEPEEVVNSGPSFPSWEIAQGKGATM) are lumenal. A helical membrane pass occupies residues 2243 to 2263 (LDSLQVFFFITVLSTKFLYWF). At 2264–2302 (QENWTARMYAMKHPEMVSSIGGFRFDEIPFRAVLPSGFA) the chain is on the cytoplasmic side. The segment at residues 2303–2323 (IVAIASLPSVVVGLLAAGVFM) is an intramembrane region (helical). Over 2324-2366 (AIMYCQNKWNATPKILTALDARDQRHDRPTEITSRVPLENTRS) the chain is Cytoplasmic. The chain crosses the membrane as a helical span at residues 2367-2387 (IMYAFCLIFSLFWAFCTRSPG). At 2388–2412 (DFLRGSLVVGASMWQILHPRSKIHD) the chain is on the lumenal side. The helical transmembrane segment at 2413–2433 (VMDFGSMVSAIGLLEMNYLFY) threads the bilayer. At 2434-3341 (RFMHIAARAL…SRYRRGNDVI (908 aa)) the chain is on the cytoplasmic side. Residues 2454–2706 (ALEKSTTIGL…SPVLPKGTRA (253 aa)) form the mRNA cap 0-1 NS5-type MT domain. S2497 lines the S-adenosyl-L-methionine pocket. K2509 acts as the For 2'-O-MTase activity in catalysis. S-adenosyl-L-methionine-binding residues include G2527, W2528, T2545, I2546, D2572, and V2573. Catalysis depends on D2587, which acts as the For 2'-O-MTase activity. Residue I2588 coordinates S-adenosyl-L-methionine. Active-site for 2'-O-MTase activity residues include K2624 and E2660. Position 2662 (Y2662) interacts with S-adenosyl-L-methionine. Zn(2+)-binding residues include E2881, H2885, C2890, and C2893. The RdRp catalytic domain maps to 2970–3117 (KYLIADDIAG…STDNRDFSSA (148 aa)). Zn(2+) contacts are provided by H3152, C3168, and C3287.

It in the N-terminal section; belongs to the class I-like SAM-binding methyltransferase superfamily. mRNA cap 0-1 NS5-type methyltransferase family. Homodimer. As to quaternary structure, forms heterodimers with envelope protein E in the endoplasmic reticulum and Golgi. In terms of assembly, homodimer; in the endoplasmic reticulum and Golgi. Forms homodimers as well as homohexamers. NS1 may interact with NS4A. As to quaternary structure, forms a heterodimer with serine protease NS3. May form homooligomers. In terms of assembly, forms a heterodimer with NS2B. Interacts with NS4B. Interacts with unphosphorylated RNA-directed RNA polymerase NS5; this interaction stimulates RNA-directed RNA polymerase NS5 guanylyltransferase activity. Interacts with serine protease NS3. As to quaternary structure, interacts with host STAT2; this interaction inhibits the phosphorylation of the latter, and, when all viral proteins are present (polyprotein), targets STAT2 for degradation. Post-translationally, genome polyprotein: Specific enzymatic cleavages in vivo yield mature proteins. Cleavages in the lumen of endoplasmic reticulum are performed by host signal peptidase, whereas cleavages in the cytoplasmic side are performed by serine protease NS3. Signal cleavage at the 2K-4B site requires a prior NS3 protease-mediated cleavage at the 4A-2K site. In terms of processing, cleaved in post-Golgi vesicles by a host furin, releasing the mature small envelope protein M, and peptide pr. This cleavage is incomplete as up to 30% of viral particles still carry uncleaved prM. N-glycosylated. Post-translationally, N-glycosylated. The excreted form is glycosylated and this is required for efficient secretion of the protein from infected cells. In terms of processing, phosphorylated on serines residues. This phosphorylation may trigger NS5 nuclear localization.

The protein localises to the virion. The protein resides in the host nucleus. Its subcellular location is the secreted. It localises to the virion membrane. It is found in the host endoplasmic reticulum membrane. The enzyme catalyses Selective hydrolysis of -Xaa-Xaa-|-Yaa- bonds in which each of the Xaa can be either Arg or Lys and Yaa can be either Ser or Ala.. It carries out the reaction RNA(n) + a ribonucleoside 5'-triphosphate = RNA(n+1) + diphosphate. The catalysed reaction is a ribonucleoside 5'-triphosphate + H2O = a ribonucleoside 5'-diphosphate + phosphate + H(+). It catalyses the reaction ATP + H2O = ADP + phosphate + H(+). The enzyme catalyses a 5'-end (5'-triphosphoguanosine)-ribonucleoside in mRNA + S-adenosyl-L-methionine = a 5'-end (N(7)-methyl 5'-triphosphoguanosine)-ribonucleoside in mRNA + S-adenosyl-L-homocysteine. It carries out the reaction a 5'-end (N(7)-methyl 5'-triphosphoguanosine)-ribonucleoside in mRNA + S-adenosyl-L-methionine = a 5'-end (N(7)-methyl 5'-triphosphoguanosine)-(2'-O-methyl-ribonucleoside) in mRNA + S-adenosyl-L-homocysteine + H(+). Functionally, plays a role in virus budding by binding to the cell membrane and gathering the viral RNA into a nucleocapsid that forms the core of a mature virus particle. During virus entry, may induce genome penetration into the host cytoplasm after hemifusion induced by the surface proteins. Can migrate to the cell nucleus where it modulates host functions. In terms of biological role, prevents premature fusion activity of envelope proteins in trans-Golgi by binding to envelope protein E at pH6.0. After virion release in extracellular space, gets dissociated from E dimers. Acts as a chaperone for envelope protein E during intracellular virion assembly by masking and inactivating envelope protein E fusion peptide. prM is the only viral peptide matured by host furin in the trans-Golgi network probably to avoid catastrophic activation of the viral fusion activity in acidic Golgi compartment prior to virion release. prM-E cleavage is inefficient, and many virions are only partially matured. These uncleaved prM would play a role in immune evasion. Its function is as follows. May play a role in virus budding. Exerts cytotoxic effects by activating a mitochondrial apoptotic pathway through M ectodomain. May display a viroporin activity. Functionally, binds to host cell surface receptor and mediates fusion between viral and cellular membranes. Envelope protein is synthesized in the endoplasmic reticulum in the form of heterodimer with protein prM. They play a role in virion budding in the ER, and the newly formed immature particle is covered with 60 spikes composed of heterodimer between precursor prM and envelope protein E. The virion is transported to the Golgi apparatus where the low pH causes dissociation of PrM-E heterodimers and formation of E homodimers. prM-E cleavage is inefficient, and many virions are only partially matured. These uncleaved prM would play a role in immune evasion. In terms of biological role, involved in immune evasion, pathogenesis and viral replication. Once cleaved off the polyprotein, is targeted to three destinations: the viral replication cycle, the plasma membrane and the extracellular compartment. May play a role in viral genome replication. Assist membrane bending and envelopment of genomic RNA at the endoplasmic reticulum. Excreted as a hexameric lipoparticle that plays a role against host immune response. Component of the viral RNA replication complex that functions in virion assembly and antagonizes the host immune response. Its function is as follows. Required cofactor for the serine protease function of NS3. May have membrane-destabilizing activity and form viroporins. Functionally, displays three enzymatic activities: serine protease, NTPase and RNA helicase. NS3 serine protease, in association with NS2B, performs its autocleavage and cleaves the polyprotein at dibasic sites in the cytoplasm: C-prM, NS2A-NS2B, NS2B-NS3, NS3-NS4A, NS4A-2K and NS4B-NS5. NS3 RNA helicase binds RNA and unwinds dsRNA in the 3' to 5' direction. In terms of biological role, regulates the ATPase activity of the NS3 helicase activity. NS4A allows NS3 helicase to conserve energy during unwinding. Functions as a signal peptide for NS4B and is required for the interferon antagonism activity of the latter. Its function is as follows. Inhibits interferon (IFN)-induced host STAT1 phosphorylation and nuclear translocation, thereby preventing the establishment of a cellular antiviral state by blocking the IFN-alpha/beta pathway. Functionally, replicates the viral (+) and (-) RNA genome, and performs the capping of genomes in the cytoplasm. NS5 methylates viral RNA cap at guanine N-7 and ribose 2'-O positions. Besides its role in RNA genome replication, also prevents the establishment of cellular antiviral state by blocking the interferon-alpha/beta (IFN-alpha/beta) signaling pathway. Inhibits host TYK2 and STAT2 phosphorylation, thereby preventing activation of JAK-STAT signaling pathway. The protein is Genome polyprotein of Aedes (CFA flavivirus).